The following is a 76-amino-acid chain: uncharacterized protein (76 aa).

Positions 1–22 (MFTKALSVVLLTCALFSGQLMA) are cleaved as a signal peptide.

This is an uncharacterized protein from Escherichia coli O157:H7.